The chain runs to 204 residues: Movement protein TGB2 (204 aa).

Residues Met1 to Lys11 lie on the Cytoplasmic side of the membrane. A helical membrane pass occupies residues Tyr12–Asn32. Over Gln33–Ala72 the chain is Lumenal. Residues Ser73 to Trp93 form a helical membrane-spanning segment. At Arg94–Ser204 the chain is on the cytoplasmic side.

It belongs to the virgaviridae/benyvirus TGB2 movement protein family. Interacts with movement protein TGB3. TGB1-TGB3-TGB2 complex formation is enhanced by ATP hydrolysis.

It localises to the host cell junction. The protein resides in the host plasmodesma. It is found in the host endoplasmic reticulum membrane. The protein localises to the host cytoplasm. Its subcellular location is the host cytoskeleton. In terms of biological role, participates in the transport of viral genome to neighboring plant cells directly through plasmodesmata, without any budding. TGBp2 and TGBp3 are necessary for intracellular delivery of TGBp1-containing vRNPs to plasmodesmata. Can gate plasmodesmata and increase their size exclusion limit. To a lesser extent than TGB3, induces host actin cytoskeleton network thickening, which probably plays a major role in virus cell-to-cell movement. The sequence is that of Movement protein TGB2 from Barley stripe mosaic virus (BSMV).